The sequence spans 639 residues: Chaperone protein DnaK (639 aa).

At Thr196 the chain carries Phosphothreonine; by autocatalysis. Residues 592-639 (ASSLYQTPDAGAPGASGPSAGGEPETGKKGGDGEVQNAEYEVIDGNDK) form a disordered region. Positions 601 to 613 (AGAPGASGPSAGG) are enriched in low complexity.

The protein belongs to the heat shock protein 70 family.

Functionally, acts as a chaperone. This chain is Chaperone protein DnaK, found in Chlorobium limicola (strain DSM 245 / NBRC 103803 / 6330).